Reading from the N-terminus, the 348-residue chain is A-type ATP synthase subunit C (348 aa).

The protein belongs to the V-ATPase V0D/AC39 subunit family. As to quaternary structure, has multiple subunits with at least A(3), B(3), C, D, E, F, H, I and proteolipid K(x).

It is found in the cell membrane. In terms of biological role, component of the A-type ATP synthase that produces ATP from ADP in the presence of a proton gradient across the membrane. In Haloferax volcanii (strain ATCC 29605 / DSM 3757 / JCM 8879 / NBRC 14742 / NCIMB 2012 / VKM B-1768 / DS2) (Halobacterium volcanii), this protein is A-type ATP synthase subunit C.